The chain runs to 706 residues: Acyl-coenzyme A oxidase (706 aa).

Residues 682-706 (MLNRPSKEERERFEKSTETAKILSK) are disordered. Positions 686–699 (PSKEERERFEKSTE) are enriched in basic and acidic residues.

The protein belongs to the acyl-CoA oxidase family. Requires FAD as cofactor.

It localises to the peroxisome. The catalysed reaction is a 2,3-saturated acyl-CoA + O2 = a (2E)-enoyl-CoA + H2O2. The protein operates within lipid metabolism; peroxisomal fatty acid beta-oxidation. The sequence is that of Acyl-coenzyme A oxidase (POX1) from Debaryomyces hansenii (strain ATCC 36239 / CBS 767 / BCRC 21394 / JCM 1990 / NBRC 0083 / IGC 2968) (Yeast).